Consider the following 475-residue polypeptide: Beta-amyrin 6-beta-monooxygenase (475 aa).

Residues 6–22 (LYSLAFALVYISLYFIF) traverse the membrane as a helical segment. Residue Cys423 participates in heme binding.

Belongs to the cytochrome P450 family. The cofactor is heme. As to expression, specifically expressed in roots.

The protein resides in the membrane. It catalyses the reaction beta-amyrin + reduced [NADPH--hemoprotein reductase] + O2 = daturadiol + oxidized [NADPH--hemoprotein reductase] + H2O + H(+). Functionally, catalyzes the C-6 beta-hydroxylation of beta-amyrin to form daturadiol. Catalyzes the C-6 beta-hydroxylation of alpha-amyrin to form 6-beta-hydroxy-alpha-amyrin. The protein is Beta-amyrin 6-beta-monooxygenase of Solanum lycopersicum (Tomato).